Reading from the N-terminus, the 913-residue chain is SUN domain-containing protein 1 (913 aa).

Positions 1 to 139 (MDFSRLHTYT…VLRHPVLDES (139 aa)) are LMNA-binding. The Nuclear segment spans residues 1–415 (MDFSRLHTYT…LTRCLRNICK (415 aa)). Residues S48 and S66 each carry the phosphoserine modification. Residues 69 to 81 (SQAIDSHISTSRA) are compositionally biased toward polar residues. Positions 69 to 120 (SQAIDSHISTSRATPAKGRETRTVKQRRSASKPAFSINHLSGKGLSSSTSHD) are disordered. The segment covering 108-120 (LSGKGLSSSTSHD) has biased composition (low complexity). Position 139 is a phosphoserine (S139). The interval 209–302 (SRVYSRDRTL…MTAGELSRVD (94 aa)) is SYNE2-binding. An EMD-binding region spans residues 223 to 302 (VSFYLDRTLW…MTAGELSRVD (80 aa)). A helical membrane pass occupies residues 416–436 (VFVLLLPLLLLLGAGVSLWGQ). At 437-913 (GNFFSLLPVL…RFRVHGEPIQ (477 aa)) the chain is on the perinuclear space side. The segment at 456-485 (RVDDSKGMHRPGPLPPSPPPKVDHKASQWP) is disordered. Coiled coils occupy residues 491–533 (GQKV…EGLS) and 563–638 (HHDH…CEQA). The tract at residues 703–913 (TSEAIVSAVN…RFRVHGEPIQ (211 aa)) is sufficient for interaction with SYNE1 and SYNE2. The SUN domain maps to 751–912 (GGSILSTRCS…YRFRVHGEPI (162 aa)).

In terms of assembly, core component of the LINC complex which is composed of inner nuclear membrane SUN domain-containing proteins coupled to outer nuclear membrane KASH domain-containing nesprins. SUN and KASH domain-containing proteins seem to bind each other promiscuously; however, differentially expression of LINC complex constituents is giving rise to specific assemblies. At least SUN1/2-containing core LINC complexes are proposed to be hexameric composed of three protomers of each KASH and SUN domain-containing protein. Interacts with KASH5 (via the last 22 amino acids); this interaction mediates KASH5 telomere localization by forming a SUN1:KASH5 LINC complex. Isoform 5 is proposed to form a non-nuclear spermatogenesis-specific LINC complex with SYNE3 during sperm head formation. Interacts with SYNE2 and SYNE1; probably forming respective LINC complexes. Interacts with A-type lamin with a strong preference for unprocessed A-type lamin compared with the mature protein. Interaction with lamins B1 and C is hardly detectable. Interacts with NAT10. Interacts with EMD and TSNAX. Associates with the nuclear pore complex (NPC). Interacts with CCDC79/TERB1; promoting the accumulation of the LINC complex complexes at the telomere-nuclear envelope attachment sites. Interacts with IRAG2. Interacts (via KASH domain) with TMEM258. In terms of processing, the disulfide bond with KASH domain-containing nesprins is required for stability of the respective LINC complexes under tensile forces. Widely expressed. Expressed in cochlear outer hair cells (at protein level). Seven isoforms are expressed in testis including testis-specific isoform 5. Isoform 5 is the only isoform expressed at the end of sperm differentiation. Six isoforms are expressed in muscle, heart and brain, four isoforms in kidney and three isoforms in liver.

Its subcellular location is the nucleus inner membrane. The protein localises to the cytoplasmic vesicle. It localises to the secretory vesicle. The protein resides in the acrosome outer membrane. In terms of biological role, as a component of the LINC (LInker of Nucleoskeleton and Cytoskeleton) complex involved in the connection between the nuclear lamina and the cytoskeleton. The nucleocytoplasmic interactions established by the LINC complex play an important role in the transmission of mechanical forces across the nuclear envelope and in nuclear movement and positioning. Required for interkinetic nuclear migration (INM) and essential for nucleokinesis and centrosome-nucleus coupling during radial neuronal migration in the cerebral cortex and during glial migration. Involved in telomere attachment to nuclear envelope in the prophase of meiosis implicating a SUN1/2:KASH5 LINC complex in which SUN1 and SUN2 seem to act at least partial redundantly. Required for gametogenesis and involved in selective gene expression of coding and non-coding RNAs needed for gametogenesis. Helps to define the distribution of nuclear pore complexes (NPCs). Required for efficient localization of SYNE4 in the nuclear envelope. May be involved in nuclear remodeling during sperm head formation in spermatogenesis. May play a role in DNA repair by suppressing non-homologous end joining repair to facilitate the repair of DNA cross-links. Its function is as follows. Isoform 5 may be involved in nuclear remodeling during sperm head formation in spermatogenesis. A probable SUN1 isoform 5:SYNE3 LINC complex may tether spermatid nuclei to anterior cytoskeletal structures such as actin filaments present at membraneous junctions of spermatids and Sertoli cells. The polypeptide is SUN domain-containing protein 1 (Mus musculus (Mouse)).